Consider the following 225-residue polypeptide: Transmembrane protein 225 (225 aa).

Residues 1-8 (MVHVSNRS) are Cytoplasmic-facing. The chain crosses the membrane as a helical span at residues 9 to 29 (IQGMNILFSSWAVVLMVMGIT). The Extracellular segment spans residues 30-72 (LDKWVELISEDERAKMNHSPWMMCCPALWPEDDLKVVRIMMTS). Residues 73 to 93 (SLGLSFLLNLILGMKFTYLIP) traverse the membrane as a helical segment. Residues 94 to 99 (QNKYIQ) are Cytoplasmic-facing. Residues 100–120 (LFTTILSFFSGISLLWALILY) traverse the membrane as a helical segment. The Extracellular segment spans residues 121–136 (HNKLKQGQSMHFSSYR). The helical transmembrane segment at 137–157 (ITWIMYTAYLNVFFLSVCGVL) threads the bilayer. At 158–225 (SLLECKLSTS…VQTRHVTWAL (68 aa)) the chain is on the cytoplasmic side. The RVxF motif lies at 219-223 (RHVTW).

In terms of assembly, interacts (via RVxF motif) with PPP1CC.

The protein resides in the cytoplasmic vesicle. It is found in the secretory vesicle. It localises to the acrosome membrane. Functionally, probably inhibits protein phosphatase 1 (PP1) in sperm via binding to catalytic subunit PPP1CC. This chain is Transmembrane protein 225 (TMEM225), found in Homo sapiens (Human).